The chain runs to 299 residues: Acetylglutamate kinase (299 aa).

Residues 72 to 73 (GG), R94, and N196 each bind substrate.

The protein belongs to the acetylglutamate kinase family. ArgB subfamily.

The protein resides in the cytoplasm. It catalyses the reaction N-acetyl-L-glutamate + ATP = N-acetyl-L-glutamyl 5-phosphate + ADP. It participates in amino-acid biosynthesis; L-arginine biosynthesis; N(2)-acetyl-L-ornithine from L-glutamate: step 2/4. Functionally, catalyzes the ATP-dependent phosphorylation of N-acetyl-L-glutamate. The sequence is that of Acetylglutamate kinase from Burkholderia mallei (strain NCTC 10247).